We begin with the raw amino-acid sequence, 120 residues long: Small ribosomal subunit protein eS24 (120 aa).

Positions 101–120 (RDAGTKQKKGGSKGGQGAKG) are disordered.

Belongs to the eukaryotic ribosomal protein eS24 family.

The protein is Small ribosomal subunit protein eS24 of Saccharolobus islandicus (strain M.16.27) (Sulfolobus islandicus).